A 375-amino-acid chain; its full sequence is Protein arginine N-methyltransferase 6 (375 aa).

Positions 1–38 (MSQPKKRKLESGGGGEGGEGTEEEDGAEREAALERPRR) are disordered. Thr-21 is modified (phosphothreonine). A compositionally biased stretch (basic and acidic residues) spans 28-38 (EREAALERPRR). Asymmetric dimethylarginine; by autocatalysis occurs at positions 29, 35, and 37. The region spanning 44-374 (DQLYYECYSD…EEKTKDFAME (331 aa)) is the SAM-dependent MTase PRMT-type domain. Residues His-57, Arg-66, Gly-90, Glu-112, and Glu-141 each coordinate S-adenosyl-L-methionine. Catalysis depends on residues Glu-155 and Glu-164.

This sequence belongs to the class I-like SAM-binding methyltransferase superfamily. Protein arginine N-methyltransferase family. PRMT6 subfamily. Interacts with EPB41L3 and NCOA1. As to quaternary structure, (Microbial infection) Interacts with (and methylates) HIV-1 Tat, Rev and Nucleocapsid protein p7 (NC). In terms of assembly, (Microbial infection) Interacts with human cytomegalovirus protein UL69. In terms of processing, automethylation enhances its stability and antiretroviral activity. As to expression, highly expressed in kidney and testis.

It is found in the nucleus. The catalysed reaction is L-arginyl-[protein] + 2 S-adenosyl-L-methionine = N(omega),N(omega)-dimethyl-L-arginyl-[protein] + 2 S-adenosyl-L-homocysteine + 2 H(+). Functionally, arginine methyltransferase that can catalyze the formation of both omega-N monomethylarginine (MMA) and asymmetrical dimethylarginine (aDMA), with a strong preference for the formation of aDMA. Preferentially methylates arginyl residues present in a glycine and arginine-rich domain and displays preference for monomethylated substrates. Specifically mediates the asymmetric dimethylation of histone H3 'Arg-2' to form H3R2me2a. H3R2me2a represents a specific tag for epigenetic transcriptional repression and is mutually exclusive with methylation on histone H3 'Lys-4' (H3K4me2 and H3K4me3). Acts as a transcriptional repressor of various genes such as HOXA2, THBS1 and TP53. Repression of TP53 blocks cellular senescence. Also methylates histone H2A and H4 'Arg-3' (H2AR3me and H4R3me, respectively). Acts as a regulator of DNA base excision during DNA repair by mediating the methylation of DNA polymerase beta (POLB), leading to the stimulation of its polymerase activity by enhancing DNA binding and processivity. Methylates HMGA1. Regulates alternative splicing events. Acts as a transcriptional coactivator of a number of steroid hormone receptors including ESR1, ESR2, PGR and NR3C1. Promotes fasting-induced transcriptional activation of the gluconeogenic program through methylation of the CRTC2 transcription coactivator. May play a role in innate immunity against HIV-1 in case of infection by methylating and impairing the function of various HIV-1 proteins such as Tat, Rev and Nucleocapsid protein p7 (NC). Methylates GPS2, protecting GPS2 from ubiquitination and degradation. Methylates SIRT7, inhibiting SIRT7 histone deacetylase activity and promoting mitochondria biogenesis. This is Protein arginine N-methyltransferase 6 (PRMT6) from Homo sapiens (Human).